The primary structure comprises 156 residues: Arginine repressor (156 aa).

This sequence belongs to the ArgR family.

Its subcellular location is the cytoplasm. It participates in amino-acid biosynthesis; L-arginine biosynthesis [regulation]. Regulates arginine biosynthesis genes. This chain is Arginine repressor, found in Escherichia fergusonii (strain ATCC 35469 / DSM 13698 / CCUG 18766 / IAM 14443 / JCM 21226 / LMG 7866 / NBRC 102419 / NCTC 12128 / CDC 0568-73).